Consider the following 381-residue polypeptide: cAMP-dependent protein kinase type I-beta regulatory subunit (381 aa).

The segment at Ala2–Val136 is dimerization and phosphorylation. Ser3 carries the phosphoserine modification. Tyr21 carries the 3'-nitrotyrosine modification. The disordered stretch occupies residues Ala67–Gly98. A phosphoserine mark is found at Ser77 and Ser83. Thr85 is modified (phosphothreonine). Positions Arg96 to Val100 match the Pseudophosphorylation motif motif. Arg97 carries the omega-N-methylarginine modification. 3',5'-cyclic AMP is bound by residues Leu137–Ser254, Glu202, Arg211, Ile255–Val381, Glu326, and Arg335.

It belongs to the cAMP-dependent kinase regulatory chain family. In terms of assembly, the inactive holoenzyme is composed of two regulatory chains and two catalytic chains. Activation by cAMP releases the two active catalytic monomers and the regulatory dimer. Interacts with PRKX; regulates this cAMP-dependent protein kinase. Interacts with C2orf88/smAKAP; this interaction may target PRKAR1B to the plasma membrane. The pseudophosphorylation site binds to the substrate-binding region of the catalytic chain, resulting in the inhibition of its activity. In terms of tissue distribution, four types of regulatory chains are found: I-alpha, I-beta, II-alpha, and II-beta. Their expression varies among tissues and is in some cases constitutive and in others inducible.

It localises to the cell membrane. Its function is as follows. Regulatory subunit of the cAMP-dependent protein kinases involved in cAMP signaling in cells. This chain is cAMP-dependent protein kinase type I-beta regulatory subunit (PRKAR1B), found in Homo sapiens (Human).